Here is a 301-residue protein sequence, read N- to C-terminus: HTH-type transcriptional regulator MtrA (301 aa).

Positions 196–297 (KRLGHLIQKV…HVSPGQYRKE (102 aa)) constitute an HTH araC/xylS-type domain. 2 consecutive DNA-binding regions (H-T-H motif) follow at residues 216–237 (DKMVAAANMSRAQLMRRFKSQV) and 264–287 (VLEVALSVGFQSETHFGKAFKRQY).

The affinity for the mtrCDE promoter increases 2-fold in the presence of TX-100, a known effector and substrate of the MtrCDE pump. Functionally, involved in the induction of the mtrCDE-encoded efflux pump. Binds specifically to the mtrCDE promoter region. Required for high-level inducible resistance to the detergent Triton X-100 (TX-100) and the spermicide nonoxynol-9 (N-9). The polypeptide is HTH-type transcriptional regulator MtrA (Neisseria gonorrhoeae).